Consider the following 515-residue polypeptide: Probable cytosol aminopeptidase (515 aa).

Positions 277 and 282 each coordinate Mn(2+). Residue Lys289 is part of the active site. The Mn(2+) site is built by Asp300, Asp359, and Glu361. Arg363 is a catalytic residue.

Belongs to the peptidase M17 family. It depends on Mn(2+) as a cofactor.

The protein resides in the cytoplasm. It carries out the reaction Release of an N-terminal amino acid, Xaa-|-Yaa-, in which Xaa is preferably Leu, but may be other amino acids including Pro although not Arg or Lys, and Yaa may be Pro. Amino acid amides and methyl esters are also readily hydrolyzed, but rates on arylamides are exceedingly low.. The catalysed reaction is Release of an N-terminal amino acid, preferentially leucine, but not glutamic or aspartic acids.. In terms of biological role, presumably involved in the processing and regular turnover of intracellular proteins. Catalyzes the removal of unsubstituted N-terminal amino acids from various peptides. This chain is Probable cytosol aminopeptidase, found in Streptomyces griseus subsp. griseus (strain JCM 4626 / CBS 651.72 / NBRC 13350 / KCC S-0626 / ISP 5235).